The primary structure comprises 301 residues: uncharacterized protein (301 aa).

Residues Ser-44 and Tyr-107 each act as charge relay system in the active site. The active-site Proton donor is the Tyr-133. The Schiff-base intermediate with substrate role is filled by Lys-162.

Belongs to the DapA family. In terms of assembly, homotetramer.

It is found in the cytoplasm. This is an uncharacterized protein from Pyrobaculum neutrophilum (strain DSM 2338 / JCM 9278 / NBRC 100436 / V24Sta) (Thermoproteus neutrophilus).